The following is a 122-amino-acid chain: Small ribosomal subunit protein uS13 (122 aa).

The segment at 97–122 (PVRGQRTHTNARTRKGPARAIAGKKK) is disordered.

Belongs to the universal ribosomal protein uS13 family. Part of the 30S ribosomal subunit. Forms a loose heterodimer with protein S19. Forms two bridges to the 50S subunit in the 70S ribosome.

Its function is as follows. Located at the top of the head of the 30S subunit, it contacts several helices of the 16S rRNA. In the 70S ribosome it contacts the 23S rRNA (bridge B1a) and protein L5 of the 50S subunit (bridge B1b), connecting the 2 subunits; these bridges are implicated in subunit movement. Contacts the tRNAs in the A and P-sites. This chain is Small ribosomal subunit protein uS13, found in Bartonella bacilliformis (strain ATCC 35685 / KC583 / Herrer 020/F12,63).